Consider the following 448-residue polypeptide: Probable glycine dehydrogenase (decarboxylating) subunit 1 (448 aa).

This sequence belongs to the GcvP family. N-terminal subunit subfamily. As to quaternary structure, the glycine cleavage system is composed of four proteins: P, T, L and H. In this organism, the P 'protein' is a heterodimer of two subunits.

The enzyme catalyses N(6)-[(R)-lipoyl]-L-lysyl-[glycine-cleavage complex H protein] + glycine + H(+) = N(6)-[(R)-S(8)-aminomethyldihydrolipoyl]-L-lysyl-[glycine-cleavage complex H protein] + CO2. In terms of biological role, the glycine cleavage system catalyzes the degradation of glycine. The P protein binds the alpha-amino group of glycine through its pyridoxal phosphate cofactor; CO(2) is released and the remaining methylamine moiety is then transferred to the lipoamide cofactor of the H protein. This chain is Probable glycine dehydrogenase (decarboxylating) subunit 1, found in Listeria welshimeri serovar 6b (strain ATCC 35897 / DSM 20650 / CCUG 15529 / CIP 8149 / NCTC 11857 / SLCC 5334 / V8).